A 387-amino-acid chain; its full sequence is Phosphoglycerate kinase (387 aa).

Substrate-binding positions include 21–23 (DLN), Arg-36, 59–62 (HLGR), Arg-113, and Arg-146. Residues Lys-197, Glu-314, and 340–343 (GGDT) each bind ATP.

This sequence belongs to the phosphoglycerate kinase family. In terms of assembly, monomer.

It is found in the cytoplasm. The enzyme catalyses (2R)-3-phosphoglycerate + ATP = (2R)-3-phospho-glyceroyl phosphate + ADP. It participates in carbohydrate degradation; glycolysis; pyruvate from D-glyceraldehyde 3-phosphate: step 2/5. The protein is Phosphoglycerate kinase of Alcanivorax borkumensis (strain ATCC 700651 / DSM 11573 / NCIMB 13689 / SK2).